A 353-amino-acid chain; its full sequence is Photosystem II D2 protein (353 aa).

At Thr-2 the chain carries N-acetylthreonine. Thr-2 carries the post-translational modification Phosphothreonine. The helical transmembrane segment at 41–61 (CAYFALGGWFTGTTFVTSWYT) threads the bilayer. His-118 is a chlorophyll a binding site. A helical membrane pass occupies residues 125-141 (GFMLRQFELARSVQLRP). Positions 130 and 143 each coordinate pheophytin a. Residues 153–166 (VFVSVFLIYPLGQS) traverse the membrane as a helical segment. His-198 contributes to the chlorophyll a binding site. A helical transmembrane segment spans residues 208 to 228 (AALLCAIHGATVENTLFEDGD). A plastoquinone is bound by residues His-215 and Phe-262. Position 215 (His-215) interacts with Fe cation. His-269 serves as a coordination point for Fe cation. The chain crosses the membrane as a helical span at residues 279–295 (GLWMSALGVVGLALNLR).

Belongs to the reaction center PufL/M/PsbA/D family. PSII is composed of 1 copy each of membrane proteins PsbA, PsbB, PsbC, PsbD, PsbE, PsbF, PsbH, PsbI, PsbJ, PsbK, PsbL, PsbM, PsbT, PsbX, PsbY, PsbZ, Psb30/Ycf12, at least 3 peripheral proteins of the oxygen-evolving complex and a large number of cofactors. It forms dimeric complexes. The D1/D2 heterodimer binds P680, chlorophylls that are the primary electron donor of PSII, and subsequent electron acceptors. It shares a non-heme iron and each subunit binds pheophytin, quinone, additional chlorophylls, carotenoids and lipids. There is also a Cl(-1) ion associated with D1 and D2, which is required for oxygen evolution. The PSII complex binds additional chlorophylls, carotenoids and specific lipids. is required as a cofactor.

It localises to the plastid. Its subcellular location is the chloroplast thylakoid membrane. The catalysed reaction is 2 a plastoquinone + 4 hnu + 2 H2O = 2 a plastoquinol + O2. Its function is as follows. Photosystem II (PSII) is a light-driven water:plastoquinone oxidoreductase that uses light energy to abstract electrons from H(2)O, generating O(2) and a proton gradient subsequently used for ATP formation. It consists of a core antenna complex that captures photons, and an electron transfer chain that converts photonic excitation into a charge separation. The D1/D2 (PsbA/PsbD) reaction center heterodimer binds P680, the primary electron donor of PSII as well as several subsequent electron acceptors. D2 is needed for assembly of a stable PSII complex. This Olimarabidopsis pumila (Dwarf rocket) protein is Photosystem II D2 protein.